Reading from the N-terminus, the 153-residue chain is Endoribonuclease YbeY (153 aa).

3 residues coordinate Zn(2+): His-114, His-118, and His-124.

This sequence belongs to the endoribonuclease YbeY family. Requires Zn(2+) as cofactor.

It localises to the cytoplasm. In terms of biological role, single strand-specific metallo-endoribonuclease involved in late-stage 70S ribosome quality control and in maturation of the 3' terminus of the 16S rRNA. This Shewanella denitrificans (strain OS217 / ATCC BAA-1090 / DSM 15013) protein is Endoribonuclease YbeY.